An 82-amino-acid chain; its full sequence is High-potential iron-sulfur protein (82 aa).

Residues Cys42, Cys45, Cys60, and Cys74 each contribute to the [4Fe-4S] cluster site.

The protein belongs to the high-potential iron-sulfur protein (HiPIP) family. Homodimer.

The protein resides in the periplasm. In terms of biological role, specific class of high-redox-potential 4Fe-4S ferredoxins. Functions in anaerobic electron transport in most purple and in some other photosynthetic bacteria and in at least one genus (Paracoccus) of halophilic, denitrifying bacteria. This chain is High-potential iron-sulfur protein (hip), found in Marichromatium purpuratum (Chromatium purpuratum).